The sequence spans 265 residues: Urease accessory protein UreH (265 aa).

This sequence belongs to the UreD family. In terms of assembly, ureH, UreF and UreG form a complex that acts as a GTP-hydrolysis-dependent molecular chaperone, activating the urease apoprotein by helping to assemble the nickel containing metallocenter of UreC. The UreE protein probably delivers the nickel.

It localises to the cytoplasm. In terms of biological role, required for maturation of urease via the functional incorporation of the urease nickel metallocenter. This is Urease accessory protein UreH from Helicobacter pylori (strain J99 / ATCC 700824) (Campylobacter pylori J99).